A 226-amino-acid polypeptide reads, in one-letter code: 3-dehydroquinate dehydratase (226 aa).

3-dehydroquinate is bound by residues 29–31 (EFR) and arginine 56. Residue histidine 120 is the Proton donor/acceptor of the active site. Lysine 146 serves as the catalytic Schiff-base intermediate with substrate. 3 residues coordinate 3-dehydroquinate: arginine 187, threonine 208, and glutamine 212.

The protein belongs to the type-I 3-dehydroquinase family. As to quaternary structure, homodimer.

It carries out the reaction 3-dehydroquinate = 3-dehydroshikimate + H2O. It functions in the pathway metabolic intermediate biosynthesis; chorismate biosynthesis; chorismate from D-erythrose 4-phosphate and phosphoenolpyruvate: step 3/7. Its function is as follows. Involved in the third step of the chorismate pathway, which leads to the biosynthesis of aromatic amino acids. Catalyzes the cis-dehydration of 3-dehydroquinate (DHQ) and introduces the first double bond of the aromatic ring to yield 3-dehydroshikimate. The protein is 3-dehydroquinate dehydratase of Halobacterium salinarum (strain ATCC 700922 / JCM 11081 / NRC-1) (Halobacterium halobium).